Consider the following 462-residue polypeptide: Phosphoglucosamine mutase (462 aa).

The active-site Phosphoserine intermediate is S111. S111, D250, D252, and D254 together coordinate Mg(2+). S111 is modified (phosphoserine).

The protein belongs to the phosphohexose mutase family. Requires Mg(2+) as cofactor. In terms of processing, activated by phosphorylation.

It catalyses the reaction alpha-D-glucosamine 1-phosphate = D-glucosamine 6-phosphate. In terms of biological role, catalyzes the conversion of glucosamine-6-phosphate to glucosamine-1-phosphate. This Synechococcus sp. (strain WH7803) protein is Phosphoglucosamine mutase.